Consider the following 168-residue polypeptide: Endoribonuclease YbeY (168 aa).

Residues histidine 123, histidine 127, and histidine 133 each coordinate Zn(2+).

This sequence belongs to the endoribonuclease YbeY family. The cofactor is Zn(2+).

Its subcellular location is the cytoplasm. Its function is as follows. Single strand-specific metallo-endoribonuclease involved in late-stage 70S ribosome quality control and in maturation of the 3' terminus of the 16S rRNA. The sequence is that of Endoribonuclease YbeY from Francisella tularensis subsp. holarctica (strain LVS).